Here is a 300-residue protein sequence, read N- to C-terminus: MDTTLSHTPGSRLSQYLALTKPRVTQLAVFCAVIGMFLATPGMVPWKVLLGGTIGIGLLAGSAFAINCLVEQKIDAMMRRTAWRPSARGEITTLQILAFSTVLGGLGAWTLYTFTNPLTMWLTIATFVGYAVIYTLLLKPMTPQNIVIGGASGAMPPALGWAAVTGAVPGDAWILVLIIFVWTPPHFWVLALYRRKDYENAGLPMLPVTHGEQFTRLHILLYTVILFAVTMMPFISGMSGAVYLTSAVLLGALFLAYAWKIYRDYSDALARRAFRYSIVYLSLLFAALLVDHYARPVIGM.

The next 9 helical transmembrane spans lie at 24 to 44, 48 to 68, 94 to 114, 118 to 138, 146 to 166, 172 to 192, 217 to 237, 239 to 259, and 278 to 298; these read VTQL…PGMV, VLLG…AINC, LQIL…LYTF, LTMW…TLLL, IVIG…AVTG, AWIL…VLAL, LHIL…FISG, SGAV…AYAW, and IVYL…RPVI.

It belongs to the UbiA prenyltransferase family. Protoheme IX farnesyltransferase subfamily.

It localises to the cell inner membrane. The enzyme catalyses heme b + (2E,6E)-farnesyl diphosphate + H2O = Fe(II)-heme o + diphosphate. The protein operates within porphyrin-containing compound metabolism; heme O biosynthesis; heme O from protoheme: step 1/1. Functionally, converts heme B (protoheme IX) to heme O by substitution of the vinyl group on carbon 2 of heme B porphyrin ring with a hydroxyethyl farnesyl side group. This is Protoheme IX farnesyltransferase from Burkholderia pseudomallei (strain 1106a).